The following is a 630-amino-acid chain: Angiotensin-converting enzyme-related protein (630 aa).

A signal peptide spans 1–22 (MGACNITVLLLVIMLWLPHGLS). The Peptidase M2 domain occupies 28 to 615 (SASVLEARRF…SRLGVPLGWG (588 aa)). 2 disulfides stabilise this stretch: Cys142/Cys150 and Cys344/Cys362. Position 375 (His375) interacts with Zn(2+). The active-site Proton acceptor is Glu376. Zn(2+) contacts are provided by His379 and Glu403. The active-site Proton donor is the His505. Cys530 and Cys548 are oxidised to a cystine.

It belongs to the peptidase M2 family. Zn(2+) is required as a cofactor. Glycosylated.

Its subcellular location is the secreted. The protein localises to the extracellular space. The enzyme catalyses Release of a C-terminal dipeptide, oligopeptide-|-Xaa-Yaa, when Xaa is not Pro, and Yaa is neither Asp nor Glu. Thus, conversion of angiotensin I to angiotensin II, with increase in vasoconstrictor activity, but no action on angiotensin II.. Its activity is regulated as follows. Inhibited by captopril, lisinopril, trandolaprilat, fosinoprilat and enalaprilat. Its function is as follows. May be involved in the specific maturation or degradation of a number of bioactive peptides. May have a role in the specification of heart progenitors. This Drosophila melanogaster (Fruit fly) protein is Angiotensin-converting enzyme-related protein (Acer).